The primary structure comprises 321 residues: Large ribosomal subunit protein uL10 (321 aa).

The interval 284-321 (SAGTAPTGGGAAAAAVEEKKEEPEEESDDDIGFSLFDD) is disordered. Acidic residues predominate over residues 306-321 (PEEESDDDIGFSLFDD).

It belongs to the universal ribosomal protein uL10 family. P0 forms a pentameric complex by interaction with dimers of P1 and P2. Post-translationally, phosphorylated.

In terms of biological role, ribosomal protein P0 is the functional equivalent of E.coli protein L10. The protein is Large ribosomal subunit protein uL10 of Oxybasis rubra (Red goosefoot).